A 686-amino-acid chain; its full sequence is Methionine--tRNA ligase (686 aa).

Positions 15–25 (PYTNGPIHIGH) match the 'HIGH' region motif. 4 residues coordinate Zn(2+): C147, C150, C160, and C163. Positions 336-340 (KLSTS) match the 'KMSKS' region motif. An ATP-binding site is contributed by T339. The tRNA-binding domain occupies 584 to 686 (DFAKMDLRVG…AGVGNGEGIN (103 aa)).

It belongs to the class-I aminoacyl-tRNA synthetase family. MetG type 1 subfamily. In terms of assembly, homodimer. Zn(2+) is required as a cofactor.

The protein resides in the cytoplasm. The enzyme catalyses tRNA(Met) + L-methionine + ATP = L-methionyl-tRNA(Met) + AMP + diphosphate. In terms of biological role, is required not only for elongation of protein synthesis but also for the initiation of all mRNA translation through initiator tRNA(fMet) aminoacylation. In Flavobacterium psychrophilum (strain ATCC 49511 / DSM 21280 / CIP 103535 / JIP02/86), this protein is Methionine--tRNA ligase.